The chain runs to 81 residues: Sec-independent protein translocase protein TatA (81 aa).

The chain crosses the membrane as a helical span at residues 1–21; sequence MGGISVWQLLIIAVIVVLLFG. The segment at 42–81 is disordered; sequence AMSDEDSAKNEKDADFEPKSLEKQQQKEAAPETKKDKEQA.

The protein belongs to the TatA/E family. The Tat system comprises two distinct complexes: a TatABC complex, containing multiple copies of TatA, TatB and TatC subunits, and a separate TatA complex, containing only TatA subunits. Substrates initially bind to the TatABC complex, which probably triggers association of the separate TatA complex to form the active translocon.

It is found in the cell inner membrane. Functionally, part of the twin-arginine translocation (Tat) system that transports large folded proteins containing a characteristic twin-arginine motif in their signal peptide across membranes. TatA could form the protein-conducting channel of the Tat system. This is Sec-independent protein translocase protein TatA from Vibrio parahaemolyticus serotype O3:K6 (strain RIMD 2210633).